A 405-amino-acid polypeptide reads, in one-letter code: Potassium channel subfamily K member 13 (405 aa).

The Cytoplasmic portion of the chain corresponds to 1–19 (MAGRGCSCSPGHLNEDNAR). A helical membrane pass occupies residues 20-40 (FLLLAGLILLYLLGGAAVFSA). Residues Asn-59 and Asn-65 are each glycosylated (N-linked (GlcNAc...) asparagine). Positions 95 to 115 (WDFTGAFYFVGTVVTTIGFGM) form an intramembrane region, pore-forming. Residues Thr-110, Ile-111, and Gly-112 each contribute to the K(+) site. The tract at residues 110–115 (TIGFGM) is selectivity filter 1. A helical transmembrane segment spans residues 125 to 145 (VFLIFYGLIGCASTILFFNLF). The Cytoplasmic segment spans residues 146–193 (LERLITVIAYVMRTCHHQQLRRRGTVARDNRKAPRKGEADSLAGWKPS). Residues 194–214 (VYYVMLILCLASVAISCGASA) form a helical membrane-spanning segment. Positions 224-244 (YFDSVYFCFVASSTIGFGDLV) form an intramembrane region, pore-forming. The K(+) site is built by Thr-237, Ile-238, Gly-239, and Phe-240. The segment at 237–242 (TIGFGD) is selectivity filter 2. Residues 263 to 283 (FFILMGVCCIYSMFNVISILI) form a helical membrane-spanning segment. Residues 284–405 (KQTVNWILRK…NRLAETSGDR (122 aa)) lie on the Cytoplasmic side of the membrane.

The protein belongs to the two pore domain potassium channel (TC 1.A.1.8) family. As to quaternary structure, homodimer. Heterodimer with KCNK12. Ubiquitous. In brain expression is rather low and restricted to the olfactory bulb and tubercle, to the ventromedial hypothalamic nucleus, lateral septal nucleus dorsal, lateral mammillary nucleus, lateral parabrachial nuclei, reticular nucleus and reunions nuclei.

It is found in the cell membrane. It carries out the reaction K(+)(in) = K(+)(out). Its activity is regulated as follows. The channel currents are activated by arachidonic acid, inhibited by volatile anesthetic halothane, partially inhibited by Ba(2+) ions and only weakly inhibited by extracellular acidification to pH 6. Functionally, k(+) channel that conducts outward rectifying tonic currents potentiated by purinergic signals. Homo- and heterodimerizes to form functional channels with distinct regulatory and gating properties. Contributes most of K(+) currents at the plasma membrane of resting microglia. Maintains a depolarized membrane potential required for proper ramified microglia morphology and phagocytosis, selectively mediating microglial pruning of presynaptic compartments at hippocampal excitatory synapses. Upon local release of ATP caused by neuronal injury or infection, it is potentiated by P2RY12 and P2RX7 receptor signaling and contributes to ATP-triggered K(+) efflux underlying microglial NLRP3 inflammasome assembly and IL1B release. The sequence is that of Potassium channel subfamily K member 13 from Rattus norvegicus (Rat).